The chain runs to 539 residues: Chaperonin GroEL (539 aa).

Residues 29–32 (TLGP), 86–90 (DGTTT), Gly413, 476–478 (NAA), and Asp492 contribute to the ATP site.

The protein belongs to the chaperonin (HSP60) family. As to quaternary structure, forms a cylinder of 14 subunits composed of two heptameric rings stacked back-to-back. Interacts with the co-chaperonin GroES.

The protein localises to the cytoplasm. It catalyses the reaction ATP + H2O + a folded polypeptide = ADP + phosphate + an unfolded polypeptide.. In terms of biological role, together with its co-chaperonin GroES, plays an essential role in assisting protein folding. The GroEL-GroES system forms a nano-cage that allows encapsulation of the non-native substrate proteins and provides a physical environment optimized to promote and accelerate protein folding. The protein is Chaperonin GroEL of Streptococcus thermophilus (strain CNRZ 1066).